The chain runs to 464 residues: MIVFVRFNSSYGFPVEVDSDTSILQLKEVVAKRQGVPADQLRVIFAGKELPNHLTVQNCDLEQQSIVHIVQRPRRRSHETNASGGDEPQSTSEGSIWESRSLTRVDLSSHTLPVDSVGLAVILDTDSKRDSEAARGPVKPTYNSFFIYCKGPCHKVQPGKLRVQCGTCKQATLTLAQGPSCWDDVLIPNRMSGECQSPDCPGTRAEFFFKCGAHPTSDKDTSVALNLITSNRRSIPCIACTDVRSPVLVFQCNHRHVICLDCFHLYCVTRLNDRQFVHDAQLGYSLPCVAGCPNSLIKELHHFRILGEEQYTRYQQYGAEECVLQMGGVLCPRPGCGAGLLPEQGQRKVTCEGGNGLGCGFVFCRDCKEAYHEGDCDSLLEPSGATSQAYRVDKRAAEQARWEEASKETIKKTTKPCPRCNVPIEKNGGCMHMKCPQPQCKLEWCWNCGCEWNRACMGDHWFDV.

In terms of domain architecture, Ubiquitin-like spans 1 to 76 (MIVFVRFNSS…VHIVQRPRRR (76 aa)). Phosphoserine; by PINK1 is present on S65. Residues 70–96 (VQRPRRRSHETNASGGDEPQSTSEGSI) are disordered. A necessary for PINK1-dependent localization to mitochondria region spans residues 77–236 (SHETNASGGD…LITSNRRSIP (160 aa)). At T80 the chain carries Phosphothreonine. The segment covering 80–96 (TNASGGDEPQSTSEGSI) has biased composition (polar residues). An RING-type 0; atypical zinc finger spans residues 140-224 (PTYNSFFIYC…PTSDKDTSVA (85 aa)). T174 is subject to Phosphothreonine; by PINK1. An SYT11 binding 1 region spans residues 203 to 237 (TRAEFFFKCGAHPTSDKDTSVALNLITSNRRSIPC). A Phosphothreonine modification is found at T216. Residues 233-464 (RSIPCIACTD…ACMGDHWFDV (232 aa)) form a TRIAD supradomain region. Zn(2+) contacts are provided by C237, C240, C252, H256, C259, C262, C288, C292, C331, and C336. Residues 237–292 (CIACTDVRSPVLVFQCNHRHVICLDCFHLYCVTRLNDRQFVHDAQLGYSLPCVAGC) form an RING-type 1 zinc finger. The interval 256-292 (HVICLDCFHLYCVTRLNDRQFVHDAQLGYSLPCVAGC) is SYT11 binding 2. The IBR-type zinc finger occupies 312 to 376 (TRYQQYGAEE…CKEAYHEGDC (65 aa)). Residue K348 forms a Glycyl lysine isopeptide (Lys-Gly) (interchain with G-Cter in ISG15) linkage. 4 residues coordinate Zn(2+): C351, C359, C364, and C367. K368 is covalently cross-linked (Glycyl lysine isopeptide (Lys-Gly) (interchain with G-Cter in ISG15)). Zn(2+) is bound by residues H372 and C376. The interval 377 to 409 (DSLLEPSGATSQAYRVDKRAAEQARWEEASKET) is REP. Zn(2+) is bound by residues C417 and C420. An RING-type 2; atypical zinc finger spans residues 417 to 448 (CPRCNVPIEKNGGCMHMKCPQPQCKLEWCWNC). C430 is a catalytic residue. Positions 435, 440, 445, 448, 456, and 460 each coordinate Zn(2+).

It belongs to the RBR family. Parkin subfamily. In terms of assembly, forms an E3 ubiquitin ligase complex with UBE2L3 or UBE2L6. Mediates 'Lys-63'-linked polyubiquitination by associating with UBE2V1. Part of a SCF-like complex, consisting of PRKN, CUL1 and FBXW7. Interacts with SNCAIP. Binds to the C2A and C2B domains of SYT11. Interacts and regulates the turnover of SEPTIN5. Part of a complex, including STUB1, HSP70 and GPR37. The amount of STUB1 in the complex increases during ER stress. STUB1 promotes the dissociation of HSP70 from PRKN and GPR37, thus facilitating PRKN-mediated GPR37 ubiquitination. HSP70 transiently associates with unfolded GPR37 and inhibits the E3 activity of PRKN, whereas, STUB1 enhances the E3 activity of PRKN through promotion of dissociation of HSP70 from PRKN-GPR37 complexes. Interacts with PSMD4 and PACRG. Interacts with LRRK2. Interacts with RANBP2. Interacts with SUMO1 but not SUMO2, which promotes nuclear localization and autoubiquitination. Interacts (via first RING-type domain) with AIMP2 (via N-terminus). Interacts with PSMA7 and RNF41. Interacts with PINK1. Forms a complex with PINK1 and PARK7. Interacts with CHPF, the interaction with isoform 2 may facilitate PRKN transport into the mitochondria. Interacts with MFN2 (phosphorylated), promotes PRKN localization in dysfunctional depolarized mitochondria. Interacts with FBXO7; this promotes translocation to dysfunctional depolarized mitochondria. Interacts with ZNF746. Interacts with heat shock protein 70 family members, including HSPA1L, HSPA1A and HSPA8; interaction HSPA1L promotes translocation to damaged mitochondria. Interacts with BAG4 and, to a lesser extent, BAG5; interaction with BAG4 inhibits translocation to damaged mitochondria. Forms a complex with PRKN and PARK7. Interacts with AMBRA1. In terms of processing, auto-ubiquitinates in an E2-dependent manner leading to its own degradation. Also polyubiquitinated by RNF41 for proteasomal degradation. S-nitrosylated. Post-translationally, phosphorylated. Activation requires phosphorylation at Ser-65 by PINK1 and binding to PINK1 phosphorylated ubiquitin. Phosphorylation at Thr-174 by PINK1 and at Thr-216 is important for mitochondrial localization. As to expression, expressed in all subdivisions of the brain (at protein level). Highly expressed in brainstem, cranial nerve, pontine, cerebellar nuclei, indusium griseum, nuclei reticularis, strata oriens and laccunosum moleculare of the hippocampal CA2 region. Low levels were found in the telencephalon and diencephalon. Expressed in heart, liver, skeletal muscle, kidney and testis.

The protein resides in the cytoplasm. It is found in the cytosol. The protein localises to the nucleus. Its subcellular location is the endoplasmic reticulum. It localises to the mitochondrion. The protein resides in the mitochondrion outer membrane. It is found in the cell projection. The protein localises to the neuron projection. Its subcellular location is the postsynaptic density. It localises to the presynapse. It carries out the reaction [E2 ubiquitin-conjugating enzyme]-S-ubiquitinyl-L-cysteine + [acceptor protein]-L-lysine = [E2 ubiquitin-conjugating enzyme]-L-cysteine + [acceptor protein]-N(6)-ubiquitinyl-L-lysine.. The protein operates within protein modification; protein ubiquitination. In the autoinhibited state the side chain of Phe-462 inserts into a hydrophobic groove in RING-0, occluding the ubiquitin acceptor site Cys-430, whereas the REP repressor element binds RING-1 and blocks its E2-binding site. Activation of PRKN requires 2 steps: (1) phosphorylation at Ser-65 by PINK1 and (2) binding to phosphorylated ubiquitin, leading to unlock repression of the catalytic Cys-430 by the RING-0 region via an allosteric mechanism and converting PRKN to its fully-active form. According to another report, phosphorylation at Ser-65 by PINK1 is not essential for activation and only binding to phosphorylated ubiquitin is essential to unlock repression. In addition, ISG15 conjugation positively regulates its ubiquitin E3 ligase activity by suppressing the intramolecular interaction that maintains its autoinhibited conformation. Its function is as follows. Functions within a multiprotein E3 ubiquitin ligase complex, catalyzing the covalent attachment of ubiquitin moieties onto substrate proteins. Substrates include SYT11 and VDAC1. Other substrates are BCL2, CCNE1, GPR37, RHOT1/MIRO1, MFN1, MFN2, STUB1, SNCAIP, SEPTIN5, TOMM20, USP30, ZNF746, MIRO1 and AIMP2. Mediates monoubiquitination as well as 'Lys-6', 'Lys-11', 'Lys-48'-linked and 'Lys-63'-linked polyubiquitination of substrates depending on the context. Participates in the removal and/or detoxification of abnormally folded or damaged protein by mediating 'Lys-63'-linked polyubiquitination of misfolded proteins such as PARK7: 'Lys-63'-linked polyubiquitinated misfolded proteins are then recognized by HDAC6, leading to their recruitment to aggresomes, followed by degradation. Mediates 'Lys-63'-linked polyubiquitination of a 22 kDa O-linked glycosylated isoform of SNCAIP, possibly playing a role in Lewy-body formation. Mediates monoubiquitination of BCL2, thereby acting as a positive regulator of autophagy. Protects against mitochondrial dysfunction during cellular stress, by acting downstream of PINK1 to coordinate mitochondrial quality control mechanisms that remove and replace dysfunctional mitochondrial components. Depending on the severity of mitochondrial damage and/or dysfunction, activity ranges from preventing apoptosis and stimulating mitochondrial biogenesis to regulating mitochondrial dynamics and eliminating severely damaged mitochondria via mitophagy. Activation and recruitment onto the outer membrane of damaged/dysfunctional mitochondria (OMM) requires PINK1-mediated phosphorylation of both PRKN and ubiquitin. After mitochondrial damage, functions with PINK1 to mediate the decision between mitophagy or preventing apoptosis by inducing either the poly- or monoubiquitination of VDAC1, respectively; polyubiquitination of VDAC1 promotes mitophagy, while monoubiquitination of VDAC1 decreases mitochondrial calcium influx which ultimately inhibits apoptosis. When cellular stress results in irreversible mitochondrial damage, promotes the autophagic degradation of dysfunctional depolarized mitochondria (mitophagy) by promoting the ubiquitination of mitochondrial proteins such as TOMM20, RHOT1/MIRO1, MFN1 and USP30. Preferentially assembles 'Lys-6'-, 'Lys-11'- and 'Lys-63'-linked polyubiquitin chains, leading to mitophagy. The PINK1-PRKN pathway also promotes fission of damaged mitochondria by PINK1-mediated phosphorylation which promotes the PRKN-dependent degradation of mitochondrial proteins involved in fission such as MFN2. This prevents the refusion of unhealthy mitochondria with the mitochondrial network or initiates mitochondrial fragmentation facilitating their later engulfment by autophagosomes. Regulates motility of damaged mitochondria via the ubiquitination and subsequent degradation of MIRO1 and MIRO2; in motor neurons, this likely inhibits mitochondrial intracellular anterograde transport along the axons which probably increases the chance of the mitochondria undergoing mitophagy in the soma. Involved in mitochondrial biogenesis via the 'Lys-48'-linked polyubiquitination of transcriptional repressor ZNF746/PARIS which leads to its subsequent proteasomal degradation and allows activation of the transcription factor PPARGC1A. Limits the production of reactive oxygen species (ROS). Regulates cyclin-E during neuronal apoptosis. In collaboration with CHPF isoform 2, may enhance cell viability and protect cells from oxidative stress. Independently of its ubiquitin ligase activity, protects from apoptosis by the transcriptional repression of p53/TP53. May protect neurons against alpha synuclein toxicity, proteasomal dysfunction, GPR37 accumulation, and kainate-induced excitotoxicity. May play a role in controlling neurotransmitter trafficking at the presynaptic terminal and in calcium-dependent exocytosis. May represent a tumor suppressor gene. In Mus musculus (Mouse), this protein is E3 ubiquitin-protein ligase parkin.